The following is a 263-amino-acid chain: Retinoic acid early transcript 1E (263 aa).

A signal peptide spans 1–30; the sequence is MRRISLTSSPVRLLLFLLLLLIALEIMVGG. The MHC class I alpha-1 like; down-regulates the cell surface expression of KLRK1 stretch occupies residues 31 to 116; that stretch reads HSLCFNFTIK…DIKPQIKTSD (86 aa). Over 31–225 the chain is Extracellular; that stretch reads HSLCFNFTIK…IHWSSSSLPD (195 aa). N-linked (GlcNAc...) asparagine glycans are attached at residues Asn36, Asn154, and Asn212. An MHC class I alpha-2 like; down-regulates the cell surface expression of KLRK1 region spans residues 117–207; that stretch reads PSTLQVEMFC…GHWEAMPEPT (91 aa). A disulfide bond links Cys126 and Cys189. A helical transmembrane segment spans residues 226–248; that stretch reads RWIILGAFILLVLMGIVLICVWW. The Cytoplasmic portion of the chain corresponds to 249–263; sequence QNGEWQAGLWPLRTS.

This sequence belongs to the MHC class I family. As to quaternary structure, binds to KLRK1/NKG2D. (Microbial infection) Contrary to other family members, does not interact with CMV glycoprotein UL16. As to expression, predominantly expressed in the skin, but also expressed in testis and trachea. Up-regulated in tumor cells of different origins. Expression progressively decreased after treatment of tumor cells with retinoic acid.

The protein localises to the membrane. It localises to the secreted. Functionally, binds and activates the KLRK1/NKG2D receptor, mediating natural killer cell cytotoxicity. The sequence is that of Retinoic acid early transcript 1E from Homo sapiens (Human).